The chain runs to 344 residues: Fructose-1,6-bisphosphatase class 1 (344 aa).

Residues Glu-91, Asp-110, Leu-112, and Asp-113 each coordinate Mg(2+). Substrate is bound by residues 113-116 (DGSS) and Asn-200. Glu-272 contacts Mg(2+).

The protein belongs to the FBPase class 1 family. In terms of assembly, homotetramer. Mg(2+) is required as a cofactor.

The protein localises to the cytoplasm. The catalysed reaction is beta-D-fructose 1,6-bisphosphate + H2O = beta-D-fructose 6-phosphate + phosphate. It participates in carbohydrate biosynthesis; Calvin cycle. This chain is Fructose-1,6-bisphosphatase class 1, found in Rhodopseudomonas palustris (strain BisA53).